A 154-amino-acid chain; its full sequence is D-aminoacyl-tRNA deacylase (154 aa).

A Gly-cisPro motif, important for rejection of L-amino acids motif is present at residues 142–143 (GP).

The protein belongs to the DTD family. As to quaternary structure, homodimer.

It localises to the cytoplasm. The enzyme catalyses glycyl-tRNA(Ala) + H2O = tRNA(Ala) + glycine + H(+). It catalyses the reaction a D-aminoacyl-tRNA + H2O = a tRNA + a D-alpha-amino acid + H(+). In terms of biological role, an aminoacyl-tRNA editing enzyme that deacylates mischarged D-aminoacyl-tRNAs. Also deacylates mischarged glycyl-tRNA(Ala), protecting cells against glycine mischarging by AlaRS. Acts via tRNA-based rather than protein-based catalysis; rejects L-amino acids rather than detecting D-amino acids in the active site. By recycling D-aminoacyl-tRNA to D-amino acids and free tRNA molecules, this enzyme counteracts the toxicity associated with the formation of D-aminoacyl-tRNA entities in vivo and helps enforce protein L-homochirality. This chain is D-aminoacyl-tRNA deacylase (DTD1), found in Yarrowia lipolytica (strain CLIB 122 / E 150) (Yeast).